The primary structure comprises 334 residues: Chitinase 9 (334 aa).

The signal sequence occupies residues 1 to 23; the sequence is MKATTTAVALLVAAAAMAAQVVA. Positions 24 to 64 constitute a Chitin-binding type-1 domain; sequence EQCGSQAGGALCPNCLCCSSYGWCGSTSDYCGDGCQSQCDG. 8 cysteine pairs are disulfide-bonded: Cys26-Cys41, Cys35-Cys47, Cys38-Cys65, Cys40-Cys54, Cys58-Cys62, Cys107-Cys169, Cys181-Cys189, and Cys288-Cys320. Residue Glu151 is the Proton donor of the active site.

The protein belongs to the glycosyl hydrolase 19 family. Chitinase class I subfamily. As to expression, expressed at high levels in roots, sheaths and meristems.

It carries out the reaction Random endo-hydrolysis of N-acetyl-beta-D-glucosaminide (1-&gt;4)-beta-linkages in chitin and chitodextrins.. Its function is as follows. May play a role in defense against fungal pathogens containing chitin. The protein is Chitinase 9 (Cht9) of Oryza sativa subsp. japonica (Rice).